Consider the following 963-residue polypeptide: Protein translocase subunit SecA (963 aa).

ATP contacts are provided by residues Gln-87, 105 to 109 (GEGKT), and Asp-512. Disordered stretches follow at residues 868 to 909 (GPVM…EDFT) and 924 to 963 (QFVGGDGSSTPQQVVAGQKVGRNDPCPCGSGKKYKKCHGS). Over residues 874 to 886 (PDEEEDGDEDSVE) the composition is skewed to acidic residues. Cys-949, Cys-951, Cys-960, and His-961 together coordinate Zn(2+).

The protein belongs to the SecA family. In terms of assembly, monomer and homodimer. Part of the essential Sec protein translocation apparatus which comprises SecA, SecYEG and auxiliary proteins SecDF. Other proteins may also be involved. Zn(2+) serves as cofactor.

It is found in the cell inner membrane. The protein localises to the cytoplasm. The enzyme catalyses ATP + H2O + cellular proteinSide 1 = ADP + phosphate + cellular proteinSide 2.. Part of the Sec protein translocase complex. Interacts with the SecYEG preprotein conducting channel. Has a central role in coupling the hydrolysis of ATP to the transfer of proteins into and across the cell membrane, serving as an ATP-driven molecular motor driving the stepwise translocation of polypeptide chains across the membrane. This chain is Protein translocase subunit SecA, found in Solibacter usitatus (strain Ellin6076).